Consider the following 392-residue polypeptide: Formate-dependent phosphoribosylglycinamide formyltransferase (392 aa).

Residues glutamate 22–leucine 23 and glutamate 82 contribute to the N(1)-(5-phospho-beta-D-ribosyl)glycinamide site. ATP is bound by residues arginine 114, lysine 155, serine 160 to glutamine 165, glutamate 195 to isoleucine 198, and glutamate 203. The ATP-grasp domain maps to valine 119–leucine 308. 2 residues coordinate Mg(2+): glutamate 267 and glutamate 279. N(1)-(5-phospho-beta-D-ribosyl)glycinamide-binding positions include aspartate 286, lysine 355, and arginine 362–arginine 363.

It belongs to the PurK/PurT family. As to quaternary structure, homodimer.

It catalyses the reaction N(1)-(5-phospho-beta-D-ribosyl)glycinamide + formate + ATP = N(2)-formyl-N(1)-(5-phospho-beta-D-ribosyl)glycinamide + ADP + phosphate + H(+). It participates in purine metabolism; IMP biosynthesis via de novo pathway; N(2)-formyl-N(1)-(5-phospho-D-ribosyl)glycinamide from N(1)-(5-phospho-D-ribosyl)glycinamide (formate route): step 1/1. Its function is as follows. Involved in the de novo purine biosynthesis. Catalyzes the transfer of formate to 5-phospho-ribosyl-glycinamide (GAR), producing 5-phospho-ribosyl-N-formylglycinamide (FGAR). Formate is provided by PurU via hydrolysis of 10-formyl-tetrahydrofolate. The protein is Formate-dependent phosphoribosylglycinamide formyltransferase of Wigglesworthia glossinidia brevipalpis.